The sequence spans 426 residues: Serine--tRNA ligase (426 aa).

A compositionally biased stretch (basic and acidic residues) spans 1–15 (MIDVKDLSENPDKFR). The tract at residues 1 to 20 (MIDVKDLSENPDKFRASQRA) is disordered. Position 228 to 230 (228 to 230 (TSE)) interacts with L-serine. Residues 259 to 261 (RRE) and Val-275 contribute to the ATP site. Position 282 (Glu-282) interacts with L-serine. Position 346-349 (346-349 (ELTS)) interacts with ATP. An L-serine-binding site is contributed by Thr-386.

It belongs to the class-II aminoacyl-tRNA synthetase family. Type-1 seryl-tRNA synthetase subfamily. In terms of assembly, homodimer. The tRNA molecule binds across the dimer.

It is found in the cytoplasm. It carries out the reaction tRNA(Ser) + L-serine + ATP = L-seryl-tRNA(Ser) + AMP + diphosphate + H(+). It catalyses the reaction tRNA(Sec) + L-serine + ATP = L-seryl-tRNA(Sec) + AMP + diphosphate + H(+). It participates in aminoacyl-tRNA biosynthesis; selenocysteinyl-tRNA(Sec) biosynthesis; L-seryl-tRNA(Sec) from L-serine and tRNA(Sec): step 1/1. In terms of biological role, catalyzes the attachment of serine to tRNA(Ser). Is also able to aminoacylate tRNA(Sec) with serine, to form the misacylated tRNA L-seryl-tRNA(Sec), which will be further converted into selenocysteinyl-tRNA(Sec). This is Serine--tRNA ligase from Paenarthrobacter aurescens (strain TC1).